A 529-amino-acid polypeptide reads, in one-letter code: UDP-glucuronosyltransferase 2B33 (529 aa).

An N-terminal signal peptide occupies residues 1–24 (MSVKWTSIILLIQLSFYFSSGSCG). N-linked (GlcNAc...) asparagine glycosylation is found at Asn-67 and Asn-68. The helical transmembrane segment at 494–514 (IGFLLACVATVIFIIMKCCLF) threads the bilayer.

It belongs to the UDP-glycosyltransferase family.

Its subcellular location is the microsome membrane. It localises to the endoplasmic reticulum membrane. The catalysed reaction is glucuronate acceptor + UDP-alpha-D-glucuronate = acceptor beta-D-glucuronoside + UDP + H(+). Its function is as follows. UDPGTs are of major importance in the conjugation and subsequent elimination of potentially toxic xenobiotics and endogenous compounds. This isozyme has glucuronidating capacity on estriol and does not catalyze the glucuronidation of beta-estradiol. Capable of conjugating 4-hydroxyestrone, androsterone, diclofenac, and hyodeoxycholic acid. This Macaca mulatta (Rhesus macaque) protein is UDP-glucuronosyltransferase 2B33 (UGT2B33).